The primary structure comprises 482 residues: Vanillin dehydrogenase (482 aa).

228–233 (GSTHVG) lines the NAD(+) pocket. Residues E250 and C284 contribute to the active site.

Belongs to the aldehyde dehydrogenase family.

The enzyme catalyses vanillin + NAD(+) + H2O = vanillate + NADH + 2 H(+). Catalyzes the NAD-dependent oxidation of vanillin to vanillic acid. In Pseudomonas fluorescens, this protein is Vanillin dehydrogenase (vdh).